We begin with the raw amino-acid sequence, 240 residues long: Phosphatidylserine decarboxylase proenzyme (240 aa).

Ser209 functions as the Schiff-base intermediate with substrate; via pyruvic acid in the catalytic mechanism. At Ser209 the chain carries Pyruvic acid (Ser); by autocatalysis.

It belongs to the phosphatidylserine decarboxylase family. PSD-A subfamily. Heterodimer of a large membrane-associated beta subunit and a small pyruvoyl-containing alpha subunit. Pyruvate serves as cofactor. In terms of processing, is synthesized initially as an inactive proenzyme. Formation of the active enzyme involves a self-maturation process in which the active site pyruvoyl group is generated from an internal serine residue via an autocatalytic post-translational modification. Two non-identical subunits are generated from the proenzyme in this reaction, and the pyruvate is formed at the N-terminus of the alpha chain, which is derived from the carboxyl end of the proenzyme. The post-translation cleavage follows an unusual pathway, termed non-hydrolytic serinolysis, in which the side chain hydroxyl group of the serine supplies its oxygen atom to form the C-terminus of the beta chain, while the remainder of the serine residue undergoes an oxidative deamination to produce ammonia and the pyruvoyl prosthetic group on the alpha chain.

The protein resides in the cell membrane. The enzyme catalyses a 1,2-diacyl-sn-glycero-3-phospho-L-serine + H(+) = a 1,2-diacyl-sn-glycero-3-phosphoethanolamine + CO2. It participates in phospholipid metabolism; phosphatidylethanolamine biosynthesis; phosphatidylethanolamine from CDP-diacylglycerol: step 2/2. Its function is as follows. Catalyzes the formation of phosphatidylethanolamine (PtdEtn) from phosphatidylserine (PtdSer). In Mycobacterium ulcerans (strain Agy99), this protein is Phosphatidylserine decarboxylase proenzyme.